The primary structure comprises 474 residues: Adenosylhomocysteinase (474 aa).

Residues T61, D136, and E196 each coordinate substrate. 197–199 (TTT) contributes to the NAD(+) binding site. Positions 226 and 230 each coordinate substrate. NAD(+) is bound by residues N231, 260-265 (GYGDVG), E283, N318, 339-341 (IGH), and N384.

It belongs to the adenosylhomocysteinase family. The cofactor is NAD(+).

It is found in the cytoplasm. The catalysed reaction is S-adenosyl-L-homocysteine + H2O = L-homocysteine + adenosine. The protein operates within amino-acid biosynthesis; L-homocysteine biosynthesis; L-homocysteine from S-adenosyl-L-homocysteine: step 1/1. Its function is as follows. May play a key role in the regulation of the intracellular concentration of adenosylhomocysteine. The protein is Adenosylhomocysteinase of Ralstonia nicotianae (strain ATCC BAA-1114 / GMI1000) (Ralstonia solanacearum).